The following is a 588-amino-acid chain: Sulfite reductase [NADPH] hemoprotein beta-component (588 aa).

Positions 442, 448, 487, and 491 each coordinate [4Fe-4S] cluster. Residue Cys491 coordinates siroheme.

It belongs to the nitrite and sulfite reductase 4Fe-4S domain family. In terms of assembly, alpha(8)-beta(8). The alpha component is a flavoprotein, the beta component is a hemoprotein. Siroheme is required as a cofactor. [4Fe-4S] cluster serves as cofactor.

It carries out the reaction hydrogen sulfide + 3 NADP(+) + 3 H2O = sulfite + 3 NADPH + 4 H(+). It participates in sulfur metabolism; hydrogen sulfide biosynthesis; hydrogen sulfide from sulfite (NADPH route): step 1/1. Its function is as follows. Component of the sulfite reductase complex that catalyzes the 6-electron reduction of sulfite to sulfide. This is one of several activities required for the biosynthesis of L-cysteine from sulfate. This Actinobacillus pleuropneumoniae serotype 3 (strain JL03) protein is Sulfite reductase [NADPH] hemoprotein beta-component.